A 940-amino-acid polypeptide reads, in one-letter code: Valine--tRNA ligase (940 aa).

The 'HIGH' region motif lies at Pro-47 to His-57. The 'KMSKS' region motif lies at Lys-564–Ser-568. Lys-567 contributes to the ATP binding site. A coiled-coil region spans residues Pro-872–Ser-938.

It belongs to the class-I aminoacyl-tRNA synthetase family. ValS type 1 subfamily. In terms of assembly, monomer.

The protein localises to the cytoplasm. The catalysed reaction is tRNA(Val) + L-valine + ATP = L-valyl-tRNA(Val) + AMP + diphosphate. Catalyzes the attachment of valine to tRNA(Val). As ValRS can inadvertently accommodate and process structurally similar amino acids such as threonine, to avoid such errors, it has a 'posttransfer' editing activity that hydrolyzes mischarged Thr-tRNA(Val) in a tRNA-dependent manner. This is Valine--tRNA ligase from Chlamydia caviae (strain ATCC VR-813 / DSM 19441 / 03DC25 / GPIC) (Chlamydophila caviae).